We begin with the raw amino-acid sequence, 550 residues long: MTRYIFITGGVVSSLGKGLASAALGALLQARGYKVRLRKLDPYLNVDPGTMSPYQHGEVFVTDDGAETDLDLGHYERFTGVSATKADNITTGQIYKTIIEKERRGDYLGATVQVIPHVTNEIKDFILSPAMDETGAKPVDFVLVEIGGTVGDIEGLPFFEAIRQLRQDLPRNQSCYVHLTLLPFIKTAGEMKTKPTQHSVKELRSIGIQPDILLCRCEQEIPVEEKRKIAQFCNVRPSAVIQAMDSSSIYAVPIDYHQEGLDAEVLDVFGMHDAPKPDLSRWEAIDQTVNHPDGEVTIAVVGKYTVLKDAYKSLIEALHHGGLANKVKVNLDWVESETFEGDEGAAAARLENAHAIMVPGGFGERGAEGKIRAAQFARERKVPYFGICFGMQMAVIETLRNVAGIKDASSSEFGPTERPVVGIMTEWIKGNETVQRRANDDLGGTMRLGAYDAVLTPGSKVAQIYGGTAISERHRHRYEVNIGYAHRMEESGLKLTGRSPDGVLPEIVEREDHPWFIGVQYHPELKSRPFAPHPLFASFIAAAKEQGRLV.

Positions 1–271 (MTRYIFITGG…DAEVLDVFGM (271 aa)) are amidoligase domain. Residue Ser13 participates in CTP binding. Ser13 is a binding site for UTP. Residue 14–19 (SLGKGL) coordinates ATP. Tyr54 contributes to the L-glutamine binding site. Residue Asp71 coordinates ATP. Mg(2+) contacts are provided by Asp71 and Glu145. Residues 152-154 (DIE), 192-197 (KTKPTQ), and Lys228 each bind CTP. Residues 192-197 (KTKPTQ) and Lys228 each bind UTP. Positions 297–549 (TIAVVGKYTV…IAAAKEQGRL (253 aa)) constitute a Glutamine amidotransferase type-1 domain. Residue Gly361 coordinates L-glutamine. Cys388 functions as the Nucleophile; for glutamine hydrolysis in the catalytic mechanism. L-glutamine is bound by residues 389–392 (FGMQ), Glu412, and Arg477. Active-site residues include His522 and Glu524.

The protein belongs to the CTP synthase family. As to quaternary structure, homotetramer.

It catalyses the reaction UTP + L-glutamine + ATP + H2O = CTP + L-glutamate + ADP + phosphate + 2 H(+). The enzyme catalyses L-glutamine + H2O = L-glutamate + NH4(+). The catalysed reaction is UTP + NH4(+) + ATP = CTP + ADP + phosphate + 2 H(+). Its pathway is pyrimidine metabolism; CTP biosynthesis via de novo pathway; CTP from UDP: step 2/2. With respect to regulation, allosterically activated by GTP, when glutamine is the substrate; GTP has no effect on the reaction when ammonia is the substrate. The allosteric effector GTP functions by stabilizing the protein conformation that binds the tetrahedral intermediate(s) formed during glutamine hydrolysis. Inhibited by the product CTP, via allosteric rather than competitive inhibition. Catalyzes the ATP-dependent amination of UTP to CTP with either L-glutamine or ammonia as the source of nitrogen. Regulates intracellular CTP levels through interactions with the four ribonucleotide triphosphates. The sequence is that of CTP synthase from Caulobacter sp. (strain K31).